Consider the following 351-residue polypeptide: Protein disulfide isomerase CRELD2 (351 aa).

An N-terminal signal peptide occupies residues 1 to 21; it reads MRPPAPAVLGLLLLLLPTGEA. The CXXC signature appears at 28-31; sequence CKRC. 4 disulfide bridges follow: C28–C31, C137–C151, C145–C163, and C165–C174. Residues 133 to 175 enclose the EGF-like 1 domain; sequence DCLACQGGSERPCSGNGHCVGDGTREGDGSCQCHLGYQGPLCS. Residues 190–237 form an FU 1 repeat; it reads HSICSACDEACKTCVGPTNRDCGQCEVGWVRQDDACVDVDECAAEPPP. N-linked (GlcNAc...) asparagine glycosylation is present at N248. Residues 250–297 form an FU 2 repeat; sequence SFVCEECDPTCMGCTGKGPTQCRECIAGYSKESGQCEDIDECSLAEKP. Residues 260-263 carry the CXXC motif; it reads CMGC. Disulfide bonds link C260/C263, C291/C305, C298/C314, and C316/C327. An EGF-like 2; calcium-binding domain is found at 287 to 328; it reads DIDECSLAEKPCLRDNENCYNTPGSFVCVCPDGFEEAEDTCV. Residues 329–351 are disordered; that stretch reads QTRPAGAEATEASPTQPPSREDL.

It belongs to the CRELD family. As to quaternary structure, interacts with CHRNA4. Component of a complex containing at least CRELD2, MANF, MATN3 and PDIA4.

The protein localises to the endoplasmic reticulum. The catalysed reaction is Catalyzes the rearrangement of -S-S- bonds in proteins.. Protein disulfide isomerase. Might play a role in the unfolded protein response. May regulate transport of alpha4-beta2 neuronal acetylcholine receptor. The protein is Protein disulfide isomerase CRELD2 (CRELD2) of Bos taurus (Bovine).